A 327-amino-acid chain; its full sequence is Tetraacyldisaccharide 4'-kinase (327 aa).

52–59 (TAGGAGKT) is a binding site for ATP.

It belongs to the LpxK family.

It catalyses the reaction a lipid A disaccharide + ATP = a lipid IVA + ADP + H(+). Its pathway is glycolipid biosynthesis; lipid IV(A) biosynthesis; lipid IV(A) from (3R)-3-hydroxytetradecanoyl-[acyl-carrier-protein] and UDP-N-acetyl-alpha-D-glucosamine: step 6/6. Transfers the gamma-phosphate of ATP to the 4'-position of a tetraacyldisaccharide 1-phosphate intermediate (termed DS-1-P) to form tetraacyldisaccharide 1,4'-bis-phosphate (lipid IVA). This is Tetraacyldisaccharide 4'-kinase from Gluconacetobacter diazotrophicus (strain ATCC 49037 / DSM 5601 / CCUG 37298 / CIP 103539 / LMG 7603 / PAl5).